Consider the following 796-residue polypeptide: Probable coatomer subunit beta' (796 aa).

WD repeat units follow at residues 4 to 42 (LDFQ…GIWN), 46 to 84 (QTLV…RVYN), 88 to 126 (GEKV…KCFN), 131 to 170 (WKCV…KVWS), 172 to 214 (GSSV…KVWD), and 218 to 256 (KACV…KIWH).

It belongs to the WD repeat COPB2 family. As to quaternary structure, oligomeric complex that consists of at least the alpha, beta, beta', gamma, delta, epsilon and zeta subunits.

Its subcellular location is the cytoplasm. The protein resides in the golgi apparatus membrane. The protein localises to the cytoplasmic vesicle. It localises to the COPI-coated vesicle membrane. Functionally, the coatomer is a cytosolic protein complex that binds to dilysine motifs and reversibly associates with Golgi non-clathrin-coated vesicles, which further mediate biosynthetic protein transport from the ER, via the Golgi up to the trans Golgi network. Coatomer complex is required for budding from Golgi membranes, and is essential for the retrograde Golgi-to-ER transport of dilysine-tagged proteins. The polypeptide is Probable coatomer subunit beta' (sec27) (Schizosaccharomyces pombe (strain 972 / ATCC 24843) (Fission yeast)).